We begin with the raw amino-acid sequence, 803 residues long: Phosphoribosylformylglycinamidine synthase subunit PurL (803 aa).

Histidine 65 is a catalytic residue. 2 residues coordinate ATP: tyrosine 68 and lysine 107. Glutamate 109 contributes to the Mg(2+) binding site. Substrate-binding positions include 110–113 (SHNH) and arginine 132. Histidine 111 (proton acceptor) is an active-site residue. Aspartate 133 is a Mg(2+) binding site. Glutamine 256 provides a ligand contact to substrate. Aspartate 284 contacts Mg(2+). 328–330 (ESQ) provides a ligand contact to substrate. ATP-binding residues include asparagine 537 and glycine 574. Asparagine 575 lines the Mg(2+) pocket. A substrate-binding site is contributed by serine 577.

It belongs to the FGAMS family. As to quaternary structure, monomer. Part of the FGAM synthase complex composed of 1 PurL, 1 PurQ and 2 PurS subunits.

It localises to the cytoplasm. The enzyme catalyses N(2)-formyl-N(1)-(5-phospho-beta-D-ribosyl)glycinamide + L-glutamine + ATP + H2O = 2-formamido-N(1)-(5-O-phospho-beta-D-ribosyl)acetamidine + L-glutamate + ADP + phosphate + H(+). Its pathway is purine metabolism; IMP biosynthesis via de novo pathway; 5-amino-1-(5-phospho-D-ribosyl)imidazole from N(2)-formyl-N(1)-(5-phospho-D-ribosyl)glycinamide: step 1/2. Part of the phosphoribosylformylglycinamidine synthase complex involved in the purines biosynthetic pathway. Catalyzes the ATP-dependent conversion of formylglycinamide ribonucleotide (FGAR) and glutamine to yield formylglycinamidine ribonucleotide (FGAM) and glutamate. The FGAM synthase complex is composed of three subunits. PurQ produces an ammonia molecule by converting glutamine to glutamate. PurL transfers the ammonia molecule to FGAR to form FGAM in an ATP-dependent manner. PurS interacts with PurQ and PurL and is thought to assist in the transfer of the ammonia molecule from PurQ to PurL. In Prochlorococcus marinus (strain NATL2A), this protein is Phosphoribosylformylglycinamidine synthase subunit PurL.